The chain runs to 517 residues: 2,3-bisphosphoglycerate-independent phosphoglycerate mutase (517 aa).

Mn(2+)-binding residues include D14 and S64. Residue S64 is the Phosphoserine intermediate of the active site. Substrate-binding positions include H125, 155–156 (RD), R187, R193, 259–262 (RPDR), and K334. 5 residues coordinate Mn(2+): D401, H405, D442, H443, and H461.

This sequence belongs to the BPG-independent phosphoglycerate mutase family. As to quaternary structure, monomer. Mn(2+) serves as cofactor.

It catalyses the reaction (2R)-2-phosphoglycerate = (2R)-3-phosphoglycerate. It functions in the pathway carbohydrate degradation; glycolysis; pyruvate from D-glyceraldehyde 3-phosphate: step 3/5. Catalyzes the interconversion of 2-phosphoglycerate and 3-phosphoglycerate. This Symbiobacterium thermophilum (strain DSM 24528 / JCM 14929 / IAM 14863 / T) protein is 2,3-bisphosphoglycerate-independent phosphoglycerate mutase.